We begin with the raw amino-acid sequence, 93 residues long: MKCAVLFLSVIALVHIFVVEAEEEPDSDALVPQERACLARGETCKDDCECCDCDNQCYCPFDWFGGKWHPVGCSCAHANQYFCDHKKEKCKKA.

The first 21 residues, 1-21 (MKCAVLFLSVIALVHIFVVEA), serve as a signal peptide directing secretion. Residues 22 to 34 (EEEPDSDALVPQE) constitute a propeptide that is removed on maturation. Intrachain disulfides connect cysteine 37–cysteine 51, cysteine 44–cysteine 57, cysteine 50–cysteine 75, cysteine 59–cysteine 73, and cysteine 83–cysteine 90.

This sequence belongs to the neurotoxin 09 (Tx3-6) family. As to expression, expressed by the venom gland.

The protein localises to the secreted. Functionally, probable neurotoxin. This chain is U11-ctenitoxin-Pn1a, found in Phoneutria nigriventer (Brazilian armed spider).